We begin with the raw amino-acid sequence, 288 residues long: Short chain aldehyde dehydrogenase 1 (288 aa).

Residues 26 to 28 (SGI), Asp47, 72 to 73 (DV), and 99 to 101 (NAG) contribute to the NAD(+) site. Catalysis depends on Ser153, which acts as the Proton donor. 2 residues coordinate substrate: Ser153 and Tyr166. Positions 166, 170, and 201 each coordinate NAD(+). Tyr166 functions as the Proton acceptor in the catalytic mechanism. The active-site Proton donor/acceptor is the Lys170.

This sequence belongs to the short-chain dehydrogenases/reductases (SDR) family. As to quaternary structure, homodimer. Expressed in mature seeds.

It carries out the reaction 4,5,8-trihydroxycasbene + 2 NAD(+) = jolkinol C + 2 NADH + 2 H(+). It catalyses the reaction a secondary alcohol + NAD(+) = a ketone + NADH + H(+). The catalysed reaction is a primary alcohol + NAD(+) = an aldehyde + NADH + H(+). It participates in secondary metabolite biosynthesis; terpenoid biosynthesis. Involved in the biosynthesis of macrocyclic lathyrane type diterpenoids (also called Euphorbia factors) natural products, including the cyclization route from casbene to jolkinol C, a precursor for ingenol mebutate that is used to treat actinic keratosis, a precancerous skin condition. Catalyzes the conversion of 4,5,8-trihydroxycasbene into jolkinol C in presence of NAD. Also mediates the formation of casbene dione derivative and 4-ketocasbene from 4-hydroxy-8-ketocasbene and 4-hydroxycasbene, respectively. Together with CYP71D445, triggers the biosynthesis of 8-ketocasbene from 8-hydroxycasbene. In Euphorbia lathyris (Caper spurge), this protein is Short chain aldehyde dehydrogenase 1.